The sequence spans 424 residues: Glutamyl-tRNA reductase (424 aa).

Substrate contacts are provided by residues 49 to 52 (TCNR), serine 105, 110 to 112 (EPQ), and glutamine 116. The active-site Nucleophile is the cysteine 50. 185 to 190 (GSGETA) lines the NADP(+) pocket.

It belongs to the glutamyl-tRNA reductase family. As to quaternary structure, homodimer.

The enzyme catalyses (S)-4-amino-5-oxopentanoate + tRNA(Glu) + NADP(+) = L-glutamyl-tRNA(Glu) + NADPH + H(+). The protein operates within porphyrin-containing compound metabolism; protoporphyrin-IX biosynthesis; 5-aminolevulinate from L-glutamyl-tRNA(Glu): step 1/2. In terms of biological role, catalyzes the NADPH-dependent reduction of glutamyl-tRNA(Glu) to glutamate 1-semialdehyde (GSA). This is Glutamyl-tRNA reductase from Legionella pneumophila (strain Lens).